Reading from the N-terminus, the 282-residue chain is Ribosome-inactivating protein bryodin II (282 aa).

Residues 1–21 (MRSIGFYSVLALYVGAHVTED) form the signal peptide. The N-linked (GlcNAc...) asparagine glycan is linked to N25. Residue E183 is part of the active site.

The protein belongs to the ribosome-inactivating protein family. Type 1 RIP subfamily.

The catalysed reaction is Endohydrolysis of the N-glycosidic bond at one specific adenosine on the 28S rRNA.. Its function is as follows. Ribosome-inactivating protein of type 1, inhibits protein synthesis in animal cells. The protein is Ribosome-inactivating protein bryodin II of Bryonia dioica (Red bryony).